Reading from the N-terminus, the 501-residue chain is Acetyl-coenzyme A carboxylase carboxyl transferase subunit beta, chloroplastic (501 aa).

Residues 231-501 (LWIECENCYG…LIQNEKESRS (271 aa)) enclose the CoA carboxyltransferase N-terminal domain. Residues C235, C238, C254, and C257 each contribute to the Zn(2+) site. The C4-type zinc finger occupies 235 to 257 (CENCYGLNYKKILKSKMNICEHC).

This sequence belongs to the AccD/PCCB family. In terms of assembly, acetyl-CoA carboxylase is a heterohexamer composed of biotin carboxyl carrier protein, biotin carboxylase and 2 subunits each of ACCase subunit alpha and ACCase plastid-coded subunit beta (accD). Requires Zn(2+) as cofactor.

It localises to the plastid. The protein localises to the chloroplast stroma. The enzyme catalyses N(6)-carboxybiotinyl-L-lysyl-[protein] + acetyl-CoA = N(6)-biotinyl-L-lysyl-[protein] + malonyl-CoA. It participates in lipid metabolism; malonyl-CoA biosynthesis; malonyl-CoA from acetyl-CoA: step 1/1. Component of the acetyl coenzyme A carboxylase (ACC) complex. Biotin carboxylase (BC) catalyzes the carboxylation of biotin on its carrier protein (BCCP) and then the CO(2) group is transferred by the transcarboxylase to acetyl-CoA to form malonyl-CoA. The chain is Acetyl-coenzyme A carboxylase carboxyl transferase subunit beta, chloroplastic from Lotus japonicus (Lotus corniculatus var. japonicus).